We begin with the raw amino-acid sequence, 201 residues long: Alpha-1-acid glycoprotein (201 aa).

An N-terminal signal peptide occupies residues 1–18 (MALPWALAVLSLLPLLHA). N-linked (GlcNAc...) asparagine glycans are attached at residues Asn-25, Asn-33, Asn-87, Asn-93, Asn-103, and Asn-169. Residues Cys-90 and Cys-183 are joined by a disulfide bond.

The protein belongs to the calycin superfamily. Lipocalin family.

It localises to the secreted. Its function is as follows. Functions as a transport protein in the blood stream. Binds various ligands in the interior of its beta-barrel domain. Appears to function in modulating the activity of the immune system during the acute-phase reaction. This is Alpha-1-acid glycoprotein (ORM1) from Oryctolagus cuniculus (Rabbit).